A 254-amino-acid polypeptide reads, in one-letter code: Small ribosomal subunit protein uS5 (254 aa).

Residues Met1 to Lys10 are compositionally biased toward polar residues. A disordered region spans residues Met1–Gly34. Ser2 is subject to N-acetylserine. Residue Arg11 is modified to Asymmetric dimethylarginine; by HMT1; alternate. Position 11 is an omega-N-methylarginine; by HMT1; alternate (Arg11). Position 17 is an omega-N-methylarginine; by HMT1 (Arg17). Residues Asn18–Pro27 show a composition bias toward basic residues. A Glycyl lysine isopeptide (Lys-Gly) (interchain with G-Cter in ubiquitin) cross-link involves residue Lys33. Residues Leu76–Ile139 enclose the S5 DRBM domain.

This sequence belongs to the universal ribosomal protein uS5 family. Component of the small ribosomal subunit (SSU). Mature yeast ribosomes consist of a small (40S) and a large (60S) subunit. The 40S small subunit contains 1 molecule of ribosomal RNA (18S rRNA) and 33 different proteins (encoded by 57 genes). The large 60S subunit contains 3 rRNA molecules (25S, 5.8S and 5S rRNA) and 46 different proteins (encoded by 81 genes). Interacts with snoRNA U3. Interacts with MPP10. Component of the ribosomal small subunit (SSU) processome composed of at least 40 protein subunits and snoRNA U3. Post-translationally, N-terminally acetylated by acetyltransferase NatA.

The protein localises to the cytoplasm. Its subcellular location is the nucleus. The protein resides in the nucleolus. In terms of biological role, component of the ribosome, a large ribonucleoprotein complex responsible for the synthesis of proteins in the cell. The small ribosomal subunit (SSU) binds messenger RNAs (mRNAs) and translates the encoded message by selecting cognate aminoacyl-transfer RNA (tRNA) molecules. The large subunit (LSU) contains the ribosomal catalytic site termed the peptidyl transferase center (PTC), which catalyzes the formation of peptide bonds, thereby polymerizing the amino acids delivered by tRNAs into a polypeptide chain. The nascent polypeptides leave the ribosome through a tunnel in the LSU and interact with protein factors that function in enzymatic processing, targeting, and the membrane insertion of nascent chains at the exit of the ribosomal tunnel. uS5 is important for the assembly and function of the 40S ribosomal subunit. Mutations in this protein affects the control of translational fidelity. Involved in nucleolar processing of pre-18S ribosomal RNA and ribosome assembly. The chain is Small ribosomal subunit protein uS5 from Saccharomyces cerevisiae (strain ATCC 204508 / S288c) (Baker's yeast).